Here is a 471-residue protein sequence, read N- to C-terminus: Cysteine--tRNA ligase (471 aa).

Residue cysteine 29 coordinates Zn(2+). Positions 31–41 (LTVQSEPHVGH) match the 'HIGH' region motif. 3 residues coordinate Zn(2+): cysteine 215, histidine 240, and glutamate 244. Positions 271 to 275 (KMSKS) match the 'KMSKS' region motif. Position 274 (lysine 274) interacts with ATP.

This sequence belongs to the class-I aminoacyl-tRNA synthetase family. As to quaternary structure, monomer. It depends on Zn(2+) as a cofactor.

The protein resides in the cytoplasm. The catalysed reaction is tRNA(Cys) + L-cysteine + ATP = L-cysteinyl-tRNA(Cys) + AMP + diphosphate. This Nocardioides sp. (strain ATCC BAA-499 / JS614) protein is Cysteine--tRNA ligase.